A 222-amino-acid polypeptide reads, in one-letter code: 2-C-methyl-D-erythritol 4-phosphate cytidylyltransferase (222 aa).

Belongs to the IspD/TarI cytidylyltransferase family. IspD subfamily.

The enzyme catalyses 2-C-methyl-D-erythritol 4-phosphate + CTP + H(+) = 4-CDP-2-C-methyl-D-erythritol + diphosphate. It functions in the pathway isoprenoid biosynthesis; isopentenyl diphosphate biosynthesis via DXP pathway; isopentenyl diphosphate from 1-deoxy-D-xylulose 5-phosphate: step 2/6. Catalyzes the formation of 4-diphosphocytidyl-2-C-methyl-D-erythritol from CTP and 2-C-methyl-D-erythritol 4-phosphate (MEP). This chain is 2-C-methyl-D-erythritol 4-phosphate cytidylyltransferase, found in Azobacteroides pseudotrichonymphae genomovar. CFP2.